The chain runs to 290 residues: Lipoyl synthase (290 aa).

7 residues coordinate [4Fe-4S] cluster: Cys-44, Cys-49, Cys-55, Cys-70, Cys-74, Cys-77, and Ser-281. Positions 56-270 (WRCGTATFMI…KQIGLEKGFS (215 aa)) constitute a Radical SAM core domain.

This sequence belongs to the radical SAM superfamily. Lipoyl synthase family. It depends on [4Fe-4S] cluster as a cofactor.

The protein localises to the cytoplasm. The catalysed reaction is [[Fe-S] cluster scaffold protein carrying a second [4Fe-4S](2+) cluster] + N(6)-octanoyl-L-lysyl-[protein] + 2 oxidized [2Fe-2S]-[ferredoxin] + 2 S-adenosyl-L-methionine + 4 H(+) = [[Fe-S] cluster scaffold protein] + N(6)-[(R)-dihydrolipoyl]-L-lysyl-[protein] + 4 Fe(3+) + 2 hydrogen sulfide + 2 5'-deoxyadenosine + 2 L-methionine + 2 reduced [2Fe-2S]-[ferredoxin]. It functions in the pathway protein modification; protein lipoylation via endogenous pathway; protein N(6)-(lipoyl)lysine from octanoyl-[acyl-carrier-protein]: step 2/2. In terms of biological role, catalyzes the radical-mediated insertion of two sulfur atoms into the C-6 and C-8 positions of the octanoyl moiety bound to the lipoyl domains of lipoate-dependent enzymes, thereby converting the octanoylated domains into lipoylated derivatives. The sequence is that of Lipoyl synthase from Treponema denticola (strain ATCC 35405 / DSM 14222 / CIP 103919 / JCM 8153 / KCTC 15104).